Consider the following 402-residue polypeptide: Protein PMR5 (402 aa).

Residues 7 to 23 (LLGISVVSAIFFLVLQQ) traverse the membrane as a helical; Signal-anchor for type II membrane protein segment. The disordered stretch occupies residues 40–60 (GSSSGSSGNQYSSSRPSAGFQ). Residues 41 to 56 (SSSGSSGNQYSSSRPS) are compositionally biased toward low complexity. Positions 140 to 142 (GDS) match the GDS motif motif. The DCXHWCLPGXXDXWN motif signature appears at 379–393 (DCSHWCLPGLPDTWN).

Belongs to the PC-esterase family. TBL subfamily. In terms of tissue distribution, expressed in flowers, siliques, stems and leaves.

The protein resides in the membrane. Its function is as follows. Required for nonhost resistance (NHR) during plant-microbe interactions. Plants mutated in PMR5 are resistant to powdery mildew species. May act as a bridging protein that binds pectin and other cell wall polysaccharides. Probably involved in maintaining esterification of pectins. May be involved in the specific O-acetylation of cell wall polymers. The sequence is that of Protein PMR5 (PMR5) from Arabidopsis thaliana (Mouse-ear cress).